Reading from the N-terminus, the 138-residue chain is Phosphoribosyl-AMP cyclohydrolase (138 aa).

Mg(2+) is bound at residue Asp85. Residue Cys86 participates in Zn(2+) binding. Mg(2+) contacts are provided by Asp87 and Asp89. Zn(2+) is bound by residues Cys102 and Cys109.

The protein belongs to the PRA-CH family. In terms of assembly, homodimer. The cofactor is Mg(2+). Requires Zn(2+) as cofactor.

It is found in the cytoplasm. The catalysed reaction is 1-(5-phospho-beta-D-ribosyl)-5'-AMP + H2O = 1-(5-phospho-beta-D-ribosyl)-5-[(5-phospho-beta-D-ribosylamino)methylideneamino]imidazole-4-carboxamide. The protein operates within amino-acid biosynthesis; L-histidine biosynthesis; L-histidine from 5-phospho-alpha-D-ribose 1-diphosphate: step 3/9. Its function is as follows. Catalyzes the hydrolysis of the adenine ring of phosphoribosyl-AMP. This chain is Phosphoribosyl-AMP cyclohydrolase, found in Methanothermobacter thermautotrophicus (strain ATCC 29096 / DSM 1053 / JCM 10044 / NBRC 100330 / Delta H) (Methanobacterium thermoautotrophicum).